The primary structure comprises 67 residues: Large ribosomal subunit protein bL32 (67 aa).

The tract at residues 1 to 44 (MAVQQNRKSPSKRDMRRSHDALGFSTLSTDSKSGERHRRHHVTK) is disordered. Residues 11 to 20 (SKRDMRRSHD) show a composition bias toward basic and acidic residues.

Belongs to the bacterial ribosomal protein bL32 family.

In Dichelobacter nodosus (strain VCS1703A), this protein is Large ribosomal subunit protein bL32.